Reading from the N-terminus, the 392-residue chain is Selenide, water dikinase 1 (392 aa).

Cys31 is a catalytic residue. Residues Lys32, 67–69 (GMD), Asp87, Asp110, and 161–164 (GGQT) contribute to the ATP site. Mg(2+) is bound at residue Asp69. Residue Asp110 coordinates Mg(2+). Asp265 contacts Mg(2+).

It belongs to the selenophosphate synthase 1 family. Class II subfamily. In terms of assembly, homodimer. Mg(2+) serves as cofactor.

The protein resides in the cell membrane. It is found in the nucleus membrane. It catalyses the reaction hydrogenselenide + ATP + H2O = selenophosphate + AMP + phosphate + 2 H(+). Its function is as follows. Synthesizes selenophosphate from selenide and ATP. This Xenopus laevis (African clawed frog) protein is Selenide, water dikinase 1 (sephs1).